The chain runs to 221 residues: Protein N-terminal glutamine amidohydrolase (221 aa).

Position 2 is an N-acetylserine (serine 2). Residues cysteine 23, histidine 79, and aspartate 97 contribute to the active site.

Belongs to the NTAQ1 family. Monomer.

It carries out the reaction N-terminal L-glutaminyl-[protein] + H2O = N-terminal L-glutamyl-[protein] + NH4(+). In terms of biological role, mediates the side-chain deamidation of N-terminal glutamine residues to glutamate, an important step in N-end rule pathway of protein degradation. Conversion of the resulting N-terminal glutamine to glutamate renders the protein susceptible to arginylation, polyubiquitination and degradation as specified by the N-end rule. Does not act on substrates with internal or C-terminal glutamine and does not act on non-glutamine residues in any position. Involved in immune response. Controls the expression of specific defense-response genes, activates the synthesis pathway for the phytoalexin camalexin, and influences basal resistance to the hemibiotroph pathogen Pseudomonas syringae pv tomato (Pst). This is Protein N-terminal glutamine amidohydrolase from Arabidopsis thaliana (Mouse-ear cress).